Reading from the N-terminus, the 478-residue chain is MASSDTEGKRVVVIGGGLVGALNACFLAKRNFQVDVYEAREDIRVANFMRGRSINLALSYRGRQALKAVGLEDQIVSKGVPMKARMIHSLSGKKSAIPYGNKSQYILSISREKLNKDLLTAVESYPNAKVHFGHKLSKCCPEEGILTMLGPNKVPRDITCDLIVGCDGAYSTVRAHLMKKPRFDYSQQYIPHGYMELTIPPKNGEYAMEPNCLHIWPRNAFMMIALPNMDKSFTCTLFMSFEEFEKLPTHSDVLDFFQKNFPDAIPLMGEQALMRDFFLLPAQPMISVKCSPFHLKSRCVLMGDAAHAIVPFFGQGMNAGFEDCLVFDELMDKFNNDLSVCLPEFSRFRIPDDHAISDLSMYNYIEMRAHVNSRWFLFQRLLDKFLHALMPSTFIPLYTMVAFTRIRYHEAVLRWHWQKKVINRGLFVLGSLVAIGSAYILVHHLSPRPLELLRSAWTGTSGHWNRSADISPRVPWSH.

FAD contacts are provided by residues valine 19, 37–40 (YEAR), and alanine 57. Residues arginine 85 and tyrosine 99 each contribute to the L-kynurenine site. FAD contacts are provided by residues arginine 111, leucine 136, threonine 172, aspartate 304, and 317–318 (MN). Asparagine 363 and tyrosine 398 together coordinate L-kynurenine. The next 2 membrane-spanning stretches (helical) occupy residues 385-404 (FLHA…VAFT) and 425-445 (GLFV…VHHL).

It belongs to the aromatic-ring hydroxylase family. KMO subfamily. FAD is required as a cofactor. In terms of tissue distribution, highest activity in liver and kidney. Low activity in spleen, stomach, intestinal tract, esophagus, heart and lung.

It is found in the mitochondrion outer membrane. It carries out the reaction L-kynurenine + NADPH + O2 + H(+) = 3-hydroxy-L-kynurenine + NADP(+) + H2O. It functions in the pathway cofactor biosynthesis; NAD(+) biosynthesis; quinolinate from L-kynurenine: step 1/3. Its function is as follows. Catalyzes the hydroxylation of L-kynurenine (L-Kyn) to form 3-hydroxy-L-kynurenine (L-3OHKyn). Required for synthesis of quinolinic acid, a neurotoxic NMDA receptor antagonist and potential endogenous inhibitor of NMDA receptor signaling in axonal targeting, synaptogenesis and apoptosis during brain development. Quinolinic acid may also affect NMDA receptor signaling in pancreatic beta cells, osteoblasts, myocardial cells, and the gastrointestinal tract. The chain is Kynurenine 3-monooxygenase from Rattus norvegicus (Rat).